The sequence spans 96 residues: Co-chaperonin GroES (96 aa).

Belongs to the GroES chaperonin family. In terms of assembly, heptamer of 7 subunits arranged in a ring. Interacts with the chaperonin GroEL.

It localises to the cytoplasm. In terms of biological role, together with the chaperonin GroEL, plays an essential role in assisting protein folding. The GroEL-GroES system forms a nano-cage that allows encapsulation of the non-native substrate proteins and provides a physical environment optimized to promote and accelerate protein folding. GroES binds to the apical surface of the GroEL ring, thereby capping the opening of the GroEL channel. This Delftia acidovorans (strain DSM 14801 / SPH-1) protein is Co-chaperonin GroES.